Here is a 590-residue protein sequence, read N- to C-terminus: Glutamine--tRNA ligase (590 aa).

The 'HIGH' region motif lies at 55–65 (PEPNGYLHIGH). ATP contacts are provided by residues 56-58 (EPN) and 62-68 (HIGHAKS). Residues Asp93 and Tyr238 each contribute to the L-glutamine site. Residues Thr257 and 292–293 (RL) each bind ATP. A 'KMSKS' region motif is present at residues 299–303 (ITSKR).

This sequence belongs to the class-I aminoacyl-tRNA synthetase family. Monomer.

It is found in the cytoplasm. The catalysed reaction is tRNA(Gln) + L-glutamine + ATP = L-glutaminyl-tRNA(Gln) + AMP + diphosphate. The sequence is that of Glutamine--tRNA ligase from Polynucleobacter asymbioticus (strain DSM 18221 / CIP 109841 / QLW-P1DMWA-1) (Polynucleobacter necessarius subsp. asymbioticus).